Here is a 707-residue protein sequence, read N- to C-terminus: Anaerobic ribonucleoside-triphosphate reductase (707 aa).

Residues 4–95 (FGVIKRDGSR…EYRHDRDLAR (92 aa)) form the ATP-cone domain. The Glycine radical domain occupies 584–707 (KKVNPYDKLD…EEVKRRVKHL (124 aa)). Cys645, Cys648, Cys663, and Cys666 together coordinate Zn(2+). Residue Gly682 is modified to Glycine radical.

The protein belongs to the anaerobic ribonucleoside-triphosphate reductase family. As to quaternary structure, forms a tetramer composed of two NrdD and two NrdG subunits.

It carries out the reaction a ribonucleoside 5'-triphosphate + formate + H(+) = a 2'-deoxyribonucleoside 5'-triphosphate + CO2 + H2O. Activated under anaerobic conditions by NrdG, a tightly associated activase. Activation involves the formation of a glycyl radical at Gly-682. In terms of biological role, catalyzes the conversion of ribonucleotides into deoxyribonucleotides, which are required for DNA synthesis and repair. In Haemophilus influenzae (strain ATCC 51907 / DSM 11121 / KW20 / Rd), this protein is Anaerobic ribonucleoside-triphosphate reductase (nrdD).